The following is a 242-amino-acid chain: Small ribosomal subunit protein uS2 (242 aa).

This sequence belongs to the universal ribosomal protein uS2 family.

The chain is Small ribosomal subunit protein uS2 from Shewanella frigidimarina (strain NCIMB 400).